The primary structure comprises 1583 residues: Methyl-CpG-binding domain protein 5/6 homolog sba (1583 aa).

Positions 81 to 115 (AVHQQQQQHHHQQQQQQQHQQQQQILPAGLVNGNG) are disordered. Residues 83–104 (HQQQQQHHHQQQQQQQHQQQQQ) show a composition bias toward low complexity. The MBD domain occupies 238–308 (RKTATSYNGN…YLFDFNAQVP (71 aa)). 7 disordered regions span residues 427 to 457 (NKLPATNRTATTPTPAPTPPPQHPNGMPTSQ), 556 to 579 (EPIVHSSQQQQQQQQQQLQQQQQL), 630 to 694 (VTLV…QTQV), 839 to 862 (AELHPQPGGGYIVSQPSPVAAASS), 940 to 980 (PPAQ…ISPQ), 1179 to 1247 (VMSR…RSIC), and 1287 to 1339 (QESP…SFPL). Positions 430-439 (PATNRTATTP) are enriched in low complexity. The segment covering 440-449 (TPAPTPPPQH) has biased composition (pro residues). Low complexity predominate over residues 563 to 579 (QQQQQQQQQQLQQQQQL). The segment covering 658–677 (AISTSHESPRQSLSSPTDSV) has biased composition (polar residues). Low complexity-rich tracts occupy residues 679–693 (SAKSTPSASPKPQTQ) and 851–862 (VSQPSPVAAASS). Polar residues-rich tracts occupy residues 1179–1195 (VMSRQGTAASPPDTTTC), 1216–1240 (CVSSSEPDAAVSPQSTESRQSPSST), and 1287–1313 (QESPTTTQLLSSVPTAQPTVEKTTVRT). The segment covering 1323–1333 (RGAARAAPSAS) has biased composition (low complexity). The PWWP domain occupies 1346–1408 (IGELIWGPAR…VNSLQSLSEG (63 aa)). Positions 1415–1446 (AQKDTRKSRKLNSQLERAIQEAMTELDNISAS) form a coiled coil. Positions 1471–1497 (IGGQQQYQQQQQQQQQQQSPSSTNNKI) are disordered. Low complexity predominate over residues 1474 to 1488 (QQQYQQQQQQQQQQQ).

As to quaternary structure, component of the polycomb repressive deubiquitinase (PR-DUB) complex, at least composed of caly/calypso, Asx and sba (MDB5/6 homolog). Interacts (via MBD domain) with Asx (via PHD domain); the interaction is important for the stability of the PR-DUB complex.

Non-catalytic component of the polycomb repressive deubiquitinase (PR-DUB) complex, a complex that specifically mediates deubiquitination of histone H2A monoubiquitinated at 'Lys-119' (H2AK118ub1). Important for maintaining stability of the PR-DUB complex. Probable epigenetic regulator involved in developmental pattern formation and eye development. In Drosophila melanogaster (Fruit fly), this protein is Methyl-CpG-binding domain protein 5/6 homolog sba.